The sequence spans 438 residues: Argininosuccinate lyase (438 aa).

The protein belongs to the lyase 1 family. Argininosuccinate lyase subfamily.

It localises to the cytoplasm. It carries out the reaction 2-(N(omega)-L-arginino)succinate = fumarate + L-arginine. It functions in the pathway amino-acid biosynthesis; L-arginine biosynthesis; L-arginine from L-ornithine and carbamoyl phosphate: step 3/3. The protein is Argininosuccinate lyase of Clostridioides difficile (strain 630) (Peptoclostridium difficile).